Reading from the N-terminus, the 338-residue chain is Methionine import ATP-binding protein MetN 2 (338 aa).

Residues 2–242 (IQLEGVSVDF…PQHAFTRQLV (241 aa)) form the ABC transporter domain. 39–46 (GTSGAGKS) contributes to the ATP binding site.

Belongs to the ABC transporter superfamily. Methionine importer (TC 3.A.1.24) family. The complex is composed of two ATP-binding proteins (MetN), two transmembrane proteins (MetI) and a solute-binding protein (MetQ).

It localises to the cell inner membrane. It catalyses the reaction L-methionine(out) + ATP + H2O = L-methionine(in) + ADP + phosphate + H(+). The catalysed reaction is D-methionine(out) + ATP + H2O = D-methionine(in) + ADP + phosphate + H(+). Part of the ABC transporter complex MetNIQ involved in methionine import. Responsible for energy coupling to the transport system. The chain is Methionine import ATP-binding protein MetN 2 from Pectobacterium atrosepticum (strain SCRI 1043 / ATCC BAA-672) (Erwinia carotovora subsp. atroseptica).